We begin with the raw amino-acid sequence, 1116 residues long: Rho GTPase-activating protein 45 (1116 aa).

Positions 1–72 (MFSRKKRELM…RPTSLSRHAS (72 aa)) are disordered. Positions 22–31 (GSPNPQSSSG) are enriched in polar residues. Phosphoserine is present on residues Ser-23, Ser-72, Ser-92, and Ser-98. One can recognise an F-BAR domain in the interval 268–538 (EEVDMLLQRC…SSKLYDPGQQ (271 aa)). The stretch at 375–498 (EHERRRKEIK…QIQEVIRQSD (124 aa)) forms a coiled coil. The interval 422–457 (VAKAEEEQQGTGPGAGTAASKALDKRRRLEEEAKNK) is disordered. A compositionally biased stretch (basic and acidic residues) spans 448 to 457 (RRLEEEAKNK). A phosphoserine mark is found at Ser-568, Ser-577, Ser-591, and Ser-618. A disordered region spans residues 569–658 (PIMRTRKGSF…MSSSEELGDQ (90 aa)). The segment covering 621 to 635 (ISISDTEVGLDTSSG) has biased composition (polar residues). Residues 643–652 (TSSSGTMSSS) are compositionally biased toward low complexity. The segment at 699–744 (THRLRKLRTPAKCRECNSYVYFQGAECEECCLACHKKCLETLAIQC) adopts a Phorbol-ester/DAG-type zinc-finger fold. A Rho-GAP domain is found at 758–971 (QDFSQAALST…TLIVHYGLVF (214 aa)). Phosphoserine occurs at positions 946, 1017, 1020, and 1022. Disordered stretches follow at residues 1004–1035 (EEAE…SSSD) and 1050–1116 (AGLE…PQFV). Polar residues-rich tracts occupy residues 1080-1090 (FNTNQSNNTSR) and 1105-1116 (GGTSQERQPQFV).

It localises to the cytoplasm. It is found in the cell projection. Its subcellular location is the ruffle membrane. Its function is as follows. Contains a GTPase activator for the Rho-type GTPases (RhoGAP) domain that would be able to negatively regulate the actin cytoskeleton as well as cell spreading. However, also contains N-terminally a BAR-domin which is able to play an autoinhibitory effect on this RhoGAP activity. The polypeptide is Rho GTPase-activating protein 45 (Mus musculus (Mouse)).